Consider the following 61-residue polypeptide: Metallothionein-1A (61 aa).

Met-1 carries the post-translational modification N-acetylmethionine. The segment at 1 to 29 is beta; it reads MDPNCSCPTGGSCSCAGSCTCKACRCTSC. Residues Cys-5, Cys-7, Cys-13, Cys-15, Cys-19, Cys-21, Cys-24, Cys-26, Cys-29, Cys-33, Cys-34, Cys-36, Cys-37, Cys-41, Cys-44, Cys-48, Cys-50, and Cys-57 each coordinate a divalent metal cation. Residues 30–61 are alpha; the sequence is KKSCCSCCPAGCARCAQGCICKGASDKCSCCA. Ser-58 is modified (phosphoserine). 2 residues coordinate a divalent metal cation: Cys-59 and Cys-60.

This sequence belongs to the metallothionein superfamily. Type 1 family. Monomer.

Its function is as follows. Metallothioneins have a high content of cysteine residues that bind various heavy metals; these proteins are transcriptionally regulated by both heavy metals and glucocorticoids. In Sus scrofa (Pig), this protein is Metallothionein-1A (MT1A).